The sequence spans 558 residues: Membrane protein insertase YidC (558 aa).

5 helical membrane-spanning segments follow: residues Ser6–Glu26, Phe359–Ile379, Leu434–Leu454, Ile480–Ile500, and Leu513–Ile533.

It belongs to the OXA1/ALB3/YidC family. Type 1 subfamily. Interacts with the Sec translocase complex via SecD. Specifically interacts with transmembrane segments of nascent integral membrane proteins during membrane integration.

The protein resides in the cell inner membrane. In terms of biological role, required for the insertion and/or proper folding and/or complex formation of integral membrane proteins into the membrane. Involved in integration of membrane proteins that insert both dependently and independently of the Sec translocase complex, as well as at least some lipoproteins. Aids folding of multispanning membrane proteins. The protein is Membrane protein insertase YidC of Blochmanniella floridana.